The following is a 366-amino-acid chain: Tetraacyldisaccharide 4'-kinase (366 aa).

An ATP-binding site is contributed by arginine 62 to threonine 69.

Belongs to the LpxK family.

It carries out the reaction a lipid A disaccharide + ATP = a lipid IVA + ADP + H(+). It functions in the pathway glycolipid biosynthesis; lipid IV(A) biosynthesis; lipid IV(A) from (3R)-3-hydroxytetradecanoyl-[acyl-carrier-protein] and UDP-N-acetyl-alpha-D-glucosamine: step 6/6. Transfers the gamma-phosphate of ATP to the 4'-position of a tetraacyldisaccharide 1-phosphate intermediate (termed DS-1-P) to form tetraacyldisaccharide 1,4'-bis-phosphate (lipid IVA). This Polynucleobacter necessarius subsp. necessarius (strain STIR1) protein is Tetraacyldisaccharide 4'-kinase.